The sequence spans 187 residues: Ribosome-recycling factor (187 aa).

Belongs to the RRF family.

It is found in the cytoplasm. Functionally, responsible for the release of ribosomes from messenger RNA at the termination of protein biosynthesis. May increase the efficiency of translation by recycling ribosomes from one round of translation to another. The chain is Ribosome-recycling factor from Orientia tsutsugamushi (strain Ikeda) (Rickettsia tsutsugamushi).